The following is a 630-amino-acid chain: MKSVMSKIKLFRPVVTLRCSYSSTDQTLLLSEFTRLCYQRDLPRAMKAMDSLQSHGLWADSATYSELIKCCISNRAVHEGNLICRHLYFNGHRPMMFLVNVLINMYVKFNLLNDAHQLFDQMPQRNVISWTTMISAYSKCKIHQKALELLVLMLRDNVRPNVYTYSSVLRSCNGMSDVRMLHCGIIKEGLESDVFVRSALIDVFAKLGEPEDALSVFDEMVTGDAIVWNSIIGGFAQNSRSDVALELFKRMKRAGFIAEQATLTSVLRACTGLALLELGMQAHVHIVKYDQDLILNNALVDMYCKCGSLEDALRVFNQMKERDVITWSTMISGLAQNGYSQEALKLFERMKSSGTKPNYITIVGVLFACSHAGLLEDGWYYFRSMKKLYGIDPVREHYGCMIDLLGKAGKLDDAVKLLNEMECEPDAVTWRTLLGACRVQRNMVLAEYAAKKVIALDPEDAGTYTLLSNIYANSQKWDSVEEIRTRMRDRGIKKEPGCSWIEVNKQIHAFIIGDNSHPQIVEVSKKLNQLIHRLTGIGYVPETNFVLQDLEGEQMEDSLRHHSEKLALAFGLMTLPIEKVIRIRKNLRICGDCHVFCKLASKLEIRSIVIRDPIRYHHFQDGKCSCGDYW.

The transit peptide at 1-76 directs the protein to the mitochondrion; the sequence is MKSVMSKIKL…LIKCCISNRA (76 aa). PPR repeat units lie at residues 60–94, 95–125, 126–160, 161–192, 193–223, 224–258, 259–289, 292–322, 323–357, 358–388, and 394–424; these read DSATYSELIKCCISNRAVHEGNLICRHLYFNGHRP, MMFLVNVLINMYVKFNLLNDAHQLFDQMPQR, NVISWTTMISAYSKCKIHQKALELLVLMLRDNVRP, NVYTYSSVLRSCNGMSDVRMLHCGIIKEGLES, DVFVRSALIDVFAKLGEPEDALSVFDEMVTG, DAIVWNSIIGGFAQNSRSDVALELFKRMKRAGFIA, EQATLTSVLRACTGLALLELGMQAHVHIVKY, DLILNNALVDMYCKCGSLEDALRVFNQMKER, DVITWSTMISGLAQNGYSQEALKLFERMKSSGTKP, NYITIVGVLFACSHAGLLEDGWYYFRSMKKL, and VREHYGCMIDLLGKAGKLDDAVKLLNEMECE. A type E motif region spans residues 429 to 504; that stretch reads TWRTLLGACR…EPGCSWIEVN (76 aa). The segment at 505 to 535 is type E(+) motif; that stretch reads KQIHAFIIGDNSHPQIVEVSKKLNQLIHRLT. Residues 536–630 are type DYW motif; sequence GIGYVPETNF…DGKCSCGDYW (95 aa).

It belongs to the PPR family. PCMP-H subfamily.

It is found in the mitochondrion. The chain is Pentatricopeptide repeat-containing protein At2g03880, mitochondrial (PCMP-H44) from Arabidopsis thaliana (Mouse-ear cress).